The sequence spans 299 residues: 33 kDa chaperonin (299 aa).

2 disulfide bridges follow: Cys240–Cys242 and Cys273–Cys276.

The protein belongs to the HSP33 family. Post-translationally, under oxidizing conditions two disulfide bonds are formed involving the reactive cysteines. Under reducing conditions zinc is bound to the reactive cysteines and the protein is inactive.

The protein resides in the cytoplasm. Functionally, redox regulated molecular chaperone. Protects both thermally unfolding and oxidatively damaged proteins from irreversible aggregation. Plays an important role in the bacterial defense system toward oxidative stress. The sequence is that of 33 kDa chaperonin from Gloeothece citriformis (strain PCC 7424) (Cyanothece sp. (strain PCC 7424)).